We begin with the raw amino-acid sequence, 190 residues long: Adenylate kinase (190 aa).

Residue Gly11–Thr16 participates in ATP binding. Residues Ser31 to Val60 form an NMP region. Residues Thr32, Arg37, Glu58–Val60, Gly86–Arg89, and Gln93 each bind AMP. The segment at Glu127–Asp137 is LID. An ATP-binding site is contributed by Arg128. The AMP site is built by Arg134 and Arg146. Gly174 is an ATP binding site.

Belongs to the adenylate kinase family. Monomer.

The protein resides in the cytoplasm. It catalyses the reaction AMP + ATP = 2 ADP. It functions in the pathway purine metabolism; AMP biosynthesis via salvage pathway; AMP from ADP: step 1/1. Functionally, catalyzes the reversible transfer of the terminal phosphate group between ATP and AMP. Plays an important role in cellular energy homeostasis and in adenine nucleotide metabolism. This is Adenylate kinase from Flavobacterium johnsoniae (strain ATCC 17061 / DSM 2064 / JCM 8514 / BCRC 14874 / CCUG 350202 / NBRC 14942 / NCIMB 11054 / UW101) (Cytophaga johnsonae).